Reading from the N-terminus, the 728-residue chain is Pre-mRNA-splicing ATP-dependent RNA helicase prp-28 (728 aa).

The disordered stretch occupies residues 19 to 155 (KKEEEAAAAK…NDEAELRARY (137 aa)). Composition is skewed to basic and acidic residues over residues 33-59 (PKKE…EEAK), 109-125 (RDYR…DRNQ), and 137-153 (EEKR…ELRA). The Q motif signature appears at 293–321 (RSWEESTLPRRLLDIVKNVGYDEPTPIQR). Positions 324-527 (IPIALQARDL…KKYLRRPAIV (204 aa)) constitute a Helicase ATP-binding domain. An ATP-binding site is contributed by 337 to 344 (AVTGSGKT). The DEAD box motif lies at 450–453 (DEAD). In terms of domain architecture, Helicase C-terminal spans 538 to 701 (TVEQRVEFVS…KVPDELRRHE (164 aa)). Positions 692–728 (KVPDELRRHEAAQNKPQKGQKKLEESNGYSGKGGSWN) are disordered. Residues 693 to 703 (VPDELRRHEAA) show a composition bias toward basic and acidic residues.

Belongs to the DEAD box helicase family. DDX23/PRP28 subfamily. In terms of assembly, component of the U5 snRNP complex.

The protein localises to the cytoplasm. It localises to the nucleus. The catalysed reaction is ATP + H2O = ADP + phosphate + H(+). Its function is as follows. ATP-dependent RNA helicase involved in mRNA splicing. May destabilize the U1/5'-splice site duplex to permit an effective competition for the 5'-splice site by the U6 snRNA, resulting in the switch between U1 and U6 at the 5'-splice site. May also act to unwind the U4/U6 base-pairing interaction in the U4/U6/U5 snRNP, facilitating the first covalent step of splicing. In Neurospora crassa (strain ATCC 24698 / 74-OR23-1A / CBS 708.71 / DSM 1257 / FGSC 987), this protein is Pre-mRNA-splicing ATP-dependent RNA helicase prp-28 (prp-28).